The chain runs to 467 residues: Receptor-like cytosolic serine/threonine-protein kinase RBK1 (467 aa).

The segment covering 1–24 (MAVEDNKNSESKNHQEVELHRNDL) has biased composition (basic and acidic residues). The disordered stretch occupies residues 1–73 (MAVEDNKNSE…PFSNTTKTVS (73 aa)). Residues 40–71 (SDSDNSSSSCSSCSSDDKSSSTSSPFSNTTKT) are compositionally biased toward low complexity. Thr-142 bears the Phosphothreonine mark. In terms of domain architecture, Protein kinase spans 153-430 (FNPENMIGKG…LRGEDGPAEL (278 aa)). Residues 159–167 (IGKGGHAEV) and Lys-181 each bind ATP. Catalysis depends on Asp-278, which acts as the Proton acceptor. A Phosphoserine modification is found at Ser-282. Thr-318 carries the post-translational modification Phosphothreonine. A Phosphotyrosine modification is found at Tyr-326.

Belongs to the protein kinase superfamily. Ser/Thr protein kinase family. In terms of assembly, interacts with ARAC5 and ARAC10. Mostly expressed in vasculature, hydathode endothem, leaf mesophyll cells and trichomes.

The protein resides in the cytoplasm. Its subcellular location is the endomembrane system. It is found in the nucleus. It carries out the reaction L-seryl-[protein] + ATP = O-phospho-L-seryl-[protein] + ADP + H(+). The enzyme catalyses L-threonyl-[protein] + ATP = O-phospho-L-threonyl-[protein] + ADP + H(+). This Arabidopsis thaliana (Mouse-ear cress) protein is Receptor-like cytosolic serine/threonine-protein kinase RBK1 (RBK1).